Here is a 90-residue protein sequence, read N- to C-terminus: Large ribosomal subunit protein bL27 (90 aa).

The interval 1–21 (MASKKAGGSTRNGRDSEAKRL) is disordered.

Belongs to the bacterial ribosomal protein bL27 family.

The chain is Large ribosomal subunit protein bL27 from Neisseria meningitidis serogroup C (strain 053442).